A 222-amino-acid polypeptide reads, in one-letter code: Oligoribonuclease (222 aa).

Residues P19–E38 form a disordered region. The segment covering A21–G35 has biased composition (polar residues). Positions L46 to L210 constitute an Exonuclease domain. The active site involves H167.

It belongs to the oligoribonuclease family.

Functionally, 3'-to-5' exoribonuclease specific for small oligoribonucleotides. This Arabidopsis thaliana (Mouse-ear cress) protein is Oligoribonuclease.